The following is a 245-amino-acid chain: Large ribosomal subunit protein uL2 (245 aa).

The disordered stretch occupies residues 198-245 (VSHPHGGGSHKRPGKPTTVARTAPPGQKVGHIAARKTGRAKRRAATKR). The segment covering 230 to 245 (AARKTGRAKRRAATKR) has biased composition (basic residues).

Belongs to the universal ribosomal protein uL2 family. In terms of assembly, part of the 50S ribosomal subunit. Forms a bridge to the 30S subunit in the 70S ribosome.

Its function is as follows. One of the primary rRNA binding proteins. Required for association of the 30S and 50S subunits to form the 70S ribosome, for tRNA binding and peptide bond formation. It has been suggested to have peptidyltransferase activity; this is somewhat controversial. Makes several contacts with the 16S rRNA in the 70S ribosome. The chain is Large ribosomal subunit protein uL2 from Korarchaeum cryptofilum (strain OPF8).